The primary structure comprises 257 residues: Mediator of RNA polymerase II transcription subunit 7 (257 aa).

Residues glutamate 33–arginine 74 form a disordered region. The span at glutamate 44–glutamate 63 shows a compositional bias: basic and acidic residues.

Belongs to the Mediator complex subunit 7 family. As to quaternary structure, component of the Mediator complex.

It localises to the nucleus. Functionally, component of the Mediator complex, a coactivator involved in the regulated transcription of nearly all RNA polymerase II-dependent genes. Mediator functions as a bridge to convey information from gene-specific regulatory proteins to the basal RNA polymerase II transcription machinery. Mediator is recruited to promoters by direct interactions with regulatory proteins and serves as a scaffold for the assembly of a functional preinitiation complex with RNA polymerase II and the general transcription factors. This Scheffersomyces stipitis (strain ATCC 58785 / CBS 6054 / NBRC 10063 / NRRL Y-11545) (Yeast) protein is Mediator of RNA polymerase II transcription subunit 7 (MED7).